Reading from the N-terminus, the 289-residue chain is Rhodopsin (289 aa).

Over 1–7 the chain is Extracellular; sequence YLVNPAG. A helical transmembrane segment spans residues 8 to 32; it reads YAALGAYMFLLILIGSPVNFLTLYV. At 33–44 the chain is on the cytoplasmic side; sequence TLEHKKLRTPLN. Residues 45 to 67 traverse the membrane as a helical segment; sequence YILLNLAVADLFMVLGGFTTTMY. Topologically, residues 68–81 are extracellular; the sequence is TSMHGYSVLGRLGC. Cysteines 81 and 158 form a disulfide. The helical transmembrane segment at 82–104 threads the bilayer; the sequence is ILEGFFATLGGEIALWSLVVLAI. The short motif at 105 to 107 is the 'Ionic lock' involved in activated form stabilization element; that stretch reads ERW. Over 105–123 the chain is Cytoplasmic; the sequence is ERWIVVCKPISNFRFTEDH. The chain crosses the membrane as a helical span at residues 124–144; sequence AIMGLAFSWVMALACAVPPLV. Over 145 to 173 the chain is Extracellular; it reads GWSRYIPEGMQCSCGVDYYTRAEGFNNES. N-linked (GlcNAc...) asparagine glycosylation occurs at asparagine 171. A helical transmembrane segment spans residues 174 to 195; it reads FVIYMFIVHFLIPLSVIFFCYG. The Cytoplasmic portion of the chain corresponds to 196-223; it reads RLLCAVKEAAAAQQESETTQRPEKEVTR. The chain crosses the membrane as a helical span at residues 224–245; that stretch reads MVVIMVIAFLVCCLPNASVAWW. Topologically, residues 246–257 are extracellular; it reads IFCNQGSDFGPI. The helical transmembrane segment at 258–279 threads the bilayer; it reads FMTLPSFFAKSAAIYNPMIYIC. Lysine 267 carries the post-translational modification N6-(retinylidene)lysine. Topologically, residues 280-289 are cytoplasmic; that stretch reads MNKQFRHCMI.

Belongs to the G-protein coupled receptor 1 family. Opsin subfamily. Phosphorylated on some or all of the serine and threonine residues present in the C-terminal region. Post-translationally, contains one covalently linked retinal chromophore.

The protein resides in the membrane. It is found in the cell projection. It localises to the cilium. The protein localises to the photoreceptor outer segment. Functionally, photoreceptor required for image-forming vision at low light intensity. While most salt water fish species use retinal as chromophore, most freshwater fish use 3-dehydroretinal, or a mixture of retinal and 3-dehydroretinal. Light-induced isomerization of 11-cis to all-trans retinal triggers a conformational change that activates signaling via G-proteins. Subsequent receptor phosphorylation mediates displacement of the bound G-protein alpha subunit by arrestin and terminates signaling. This is Rhodopsin (rho) from Limnocottus bergianus.